The primary structure comprises 117 residues: G antigen 12I (117 aa).

The interval 1 to 117 is disordered; sequence MSWRGRSTYY…PEEGEKQSQC (117 aa). Acidic residues-rich tracts occupy residues 32–45 and 87–96; these read FSDE…EEGE and ECEDGPDGQE. The span at 103–117 shows a compositional bias: basic and acidic residues; the sequence is EEVKTPEEGEKQSQC.

This sequence belongs to the GAGE family. Forms tetramers.

In Homo sapiens (Human), this protein is G antigen 12I (GAGE12I).